Here is a 518-residue protein sequence, read N- to C-terminus: Kelch repeat and BTB domain-containing protein 4 (518 aa).

The region spanning 45-112 is the BTB domain; the sequence is ADVTISVEGR…IYHGTVKLRA (68 aa). Positions 147–239 constitute a BACK domain; sequence CLQVMWLADR…SLKEIGENVH (93 aa). 5 Kelch repeats span residues 239-285, 286-328, 331-378, 380-430, and 432-481; these read HIYL…KHGG, DLYV…SVPG, AIYS…NLNG, IYLL…VHKD, and VFIV…VFRD.

As to quaternary structure, component of the BCR(KBTBD4) E3 ubiquitin ligase complex, at least composed of CUL3, KBTBD4 and RBX1.

Functionally, substrate-specific adapter of a BCR (BTB-CUL3-RBX1) E3 ubiquitin ligase complex which targets CoREST corepressor complex components RCOR1, KDM1A/LSD1 and HDAC2 for proteasomal degradation. RCOR1 is likely to be the primary target while degradation of KDM1A and HDAC2 is likely due to their association with RCOR1. Also targets RCOR3, MIER2 and MIER3 for proteasomal degradation as well as associated proteins ZNF217 and RREB1. Degradation is dependent on the presence of an ELM2 domain in the target proteins. This Pongo abelii (Sumatran orangutan) protein is Kelch repeat and BTB domain-containing protein 4 (KBTBD4).